We begin with the raw amino-acid sequence, 1155 residues long: RHO1 GDP-GTP exchange protein 1 (1155 aa).

M1 carries the post-translational modification N-acetylmethionine. Over residues 100 to 143 (NSSPQSFTGDQISPTNKKISINDSTRQDKGNSCTTTSSPSQKRS) the composition is skewed to polar residues. A disordered region spans residues 100-249 (NSSPQSFTGD…HSRSKSSPVS (150 aa)). Residues S154 and S155 each carry the phosphoserine modification. Residues 155 to 167 (SPSLLSFSKNSGS) are compositionally biased toward low complexity. T180 carries the phosphothreonine modification. Low complexity predominate over residues 190–227 (LHSSFNGKHSSSSTSSLFALESLKTQNRRSSNSSNHSS). The span at 228–243 (QYRRHTNQHQRHHSRS) shows a compositional bias: basic residues. At S433 the chain carries Phosphoserine. The 188-residue stretch at 464–651 (KRQEAIYELF…KDLMKRIDRA (188 aa)) folds into the DH domain. In terms of domain architecture, CNH spans 842–1137 (TNRVNDVLIC…RMLKSYAKKI (296 aa)).

Its function is as follows. Stimulates the exchange of RHO1 GDP-bound form into GTP-bound form. The protein is RHO1 GDP-GTP exchange protein 1 (ROM1) of Saccharomyces cerevisiae (strain ATCC 204508 / S288c) (Baker's yeast).